Reading from the N-terminus, the 187-residue chain is Adenylate kinase 1 (187 aa).

ATP is bound at residue 14–19 (GSGKGT). An NMP region spans residues 34–63 (STGDMLRQAIADGTELGNQAKGYMDKGELV). AMP is bound by residues T35, R40, 61-63 (ELV), 89-92 (GFPR), and Q96. Residues 130–136 (ARGRADD) are LID. R131 provides a ligand contact to ATP. AMP contacts are provided by R133 and R144. Residue Q172 participates in ATP binding.

The protein belongs to the adenylate kinase family. Monomer.

Its subcellular location is the cytoplasm. The catalysed reaction is AMP + ATP = 2 ADP. It functions in the pathway purine metabolism; AMP biosynthesis via salvage pathway; AMP from ADP: step 1/1. Its function is as follows. Catalyzes the reversible transfer of the terminal phosphate group between ATP and AMP. Plays an important role in cellular energy homeostasis and in adenine nucleotide metabolism. The polypeptide is Adenylate kinase 1 (Synechocystis sp. (strain ATCC 27184 / PCC 6803 / Kazusa)).